A 224-amino-acid polypeptide reads, in one-letter code: Retinoschisin (224 aa).

The signal sequence occupies residues 1 to 23; that stretch reads MPHKIEGFFLLLLFGYEATLGLS. One can recognise an F5/8 type C domain in the interval 63-219; it reads CPYHKPLGFE…IAIRMELLEC (157 aa). Disulfide bonds link C63-C219 and C110-C142.

In terms of assembly, homooctamer of 4 homodimers; disulfide-linked. The homooctamer has a flat, cogwheel structure with a diameter of about 14 nm. Two stacked octamers can assemble to form a hexadecamer. Detected in the eye cup. Detected in retina, in the inner segment of the photoreceptors, the inner nuclear layer, the inner plexiform layer and the ganglion cell layer (at protein level). Restricted to the retina. At the mRNA level, detected only within the photoreceptor cell layer, most prominently within the inner segments of the photoreceptors. Undetectable in the inner plexiform layers and the inner nuclear layer.

The protein resides in the secreted. The protein localises to the cell membrane. Binds negatively charged membrane lipids, such as phosphatidylserine and phosphoinositides. May play a role in cell-cell adhesion processes in the retina, via homomeric interaction between octamers present on the surface of two neighboring cells. Required for normal structure and function of the retina. The protein is Retinoschisin (Rs1) of Mus musculus (Mouse).